The chain runs to 315 residues: Methionyl-tRNA formyltransferase (315 aa).

Residues Ser-2–Asp-189 are N-terminal domain. Ser-113–Pro-116 provides a ligand contact to (6S)-5,6,7,8-tetrahydrofolate. Residues Lys-210 to Val-315 form a C-terminal domain region.

It belongs to the Fmt family.

It catalyses the reaction L-methionyl-tRNA(fMet) + (6R)-10-formyltetrahydrofolate = N-formyl-L-methionyl-tRNA(fMet) + (6S)-5,6,7,8-tetrahydrofolate + H(+). Its function is as follows. Attaches a formyl group to the free amino group of methionyl-tRNA(fMet). The formyl group appears to play a dual role in the initiator identity of N-formylmethionyl-tRNA by promoting its recognition by IF2 and preventing the misappropriation of this tRNA by the elongation apparatus. This Escherichia coli O157:H7 protein is Methionyl-tRNA formyltransferase.